The sequence spans 463 residues: Nitrate/nitrite antiporter NarK (463 aa).

The Cytoplasmic portion of the chain corresponds to methionine 1–asparagine 37. Residues leucine 38–alanine 59 form a helical membrane-spanning segment. The Periplasmic portion of the chain corresponds to valine 60–glutamine 73. A helical transmembrane segment spans residues leucine 74–methionine 95. Arginine 89 contacts nitrate. Arginine 89 serves as a coordination point for nitrite. The Cytoplasmic segment spans residues valine 96 to arginine 102. The helical transmembrane segment at arginine 103–alanine 122 threads the bilayer. At valine 123–tyrosine 130 the chain is on the periplasmic side. The helical transmembrane segment at serine 131–methionine 151 threads the bilayer. Residues alanine 152–alanine 166 lie on the Cytoplasmic side of the membrane. Residues leucine 167–valine 189 traverse the membrane as a helical segment. A nitrate-binding site is contributed by asparagine 175. The Periplasmic segment spans residues serine 190 to tyrosine 211. Residues leucine 212–glycine 233 form a helical membrane-spanning segment. Over methionine 234 to arginine 253 the chain is Cytoplasmic. The chain crosses the membrane as a helical span at residues glycine 254–serine 281. Tyrosine 263 is a binding site for nitrate. Nitrite is bound at residue tyrosine 263. The Periplasmic portion of the chain corresponds to lysine 282 to glutamine 289. A helical transmembrane segment spans residues isoleucine 290–serine 312. The Cytoplasmic segment spans residues aspartate 313 to glycine 316. A helical membrane pass occupies residues glycine 317–threonine 338. Residues leucine 339 to serine 347 are Periplasmic-facing. A helical transmembrane segment spans residues phenylalanine 348–isoleucine 373. At serine 374–alanine 405 the chain is on the cytoplasmic side. A helical membrane pass occupies residues alanine 406–serine 427. Serine 411 provides a ligand contact to nitrate. Over serine 428 to proline 435 the chain is Periplasmic. The chain crosses the membrane as a helical span at residues valine 436–glycine 458. The Cytoplasmic segment spans residues arginine 459 to lysine 463.

It belongs to the major facilitator superfamily. Nitrate/nitrite porter (TC 2.A.1.8) family.

It is found in the cell inner membrane. The catalysed reaction is nitrate(in) + nitrite(out) = nitrate(out) + nitrite(in). Functionally, catalyzes nitrate uptake, nitrite uptake and nitrite export across the cytoplasmic membrane. Functions as a nitrate/nitrite exchanger, and protons are unlikely to be co-transported. This chain is Nitrate/nitrite antiporter NarK, found in Escherichia coli (strain K12).